Reading from the N-terminus, the 432-residue chain is Amino-acid acetyltransferase (432 aa).

In terms of domain architecture, N-acetyltransferase spans 286–425 (EQLREAGIED…ASLYNFQRNS (140 aa)).

Belongs to the acetyltransferase family. ArgA subfamily.

The protein resides in the cytoplasm. It catalyses the reaction L-glutamate + acetyl-CoA = N-acetyl-L-glutamate + CoA + H(+). It functions in the pathway amino-acid biosynthesis; L-arginine biosynthesis; N(2)-acetyl-L-ornithine from L-glutamate: step 1/4. This is Amino-acid acetyltransferase from Pseudomonas aeruginosa (strain LESB58).